The chain runs to 405 residues: Chalcone synthase (405 aa).

Residue Cys170 is part of the active site.

It belongs to the thiolase-like superfamily. Chalcone/stilbene synthases family.

The catalysed reaction is (E)-4-coumaroyl-CoA + 3 malonyl-CoA + 3 H(+) = 2',4,4',6'-tetrahydroxychalcone + 3 CO2 + 4 CoA. The protein operates within secondary metabolite biosynthesis; flavonoid biosynthesis. Functionally, the primary product of this enzyme is 4,2',4',6'-tetrahydroxychalcone (also termed naringenin-chalcone or chalcone) which can under specific conditions spontaneously isomerize into naringenin. The chain is Chalcone synthase (CHS) from Equisetum arvense (Field horsetail).